The primary structure comprises 274 residues: 2,3,4,5-tetrahydropyridine-2,6-dicarboxylate N-succinyltransferase (274 aa).

Belongs to the transferase hexapeptide repeat family.

It localises to the cytoplasm. The catalysed reaction is (S)-2,3,4,5-tetrahydrodipicolinate + succinyl-CoA + H2O = (S)-2-succinylamino-6-oxoheptanedioate + CoA. The protein operates within amino-acid biosynthesis; L-lysine biosynthesis via DAP pathway; LL-2,6-diaminopimelate from (S)-tetrahydrodipicolinate (succinylase route): step 1/3. The chain is 2,3,4,5-tetrahydropyridine-2,6-dicarboxylate N-succinyltransferase from Delftia acidovorans (strain DSM 14801 / SPH-1).